The primary structure comprises 264 residues: Leukocyte receptor cluster member 1 (264 aa).

2 disordered regions span residues 1–37 (MNIL…RERR) and 49–76 (FLRK…SGPV). Over residues 12 to 37 (RNKDNVARVRRDEAQAREEEKERERR) the composition is skewed to basic and acidic residues. Residues 16-46 (NVARVRRDEAQAREEEKERERRVLLAQQEAR) adopt a coiled-coil conformation. Phosphoserine is present on Ser-59. Positions 59 to 75 (SLPELEAAEAGAPGSGP) are enriched in low complexity. Residues 89–115 (VIRGNKEYKEEKRQEKERQEKALGILT) are a coiled coil. Residues 118–264 (GQSAAEAQTQ…PRQQDPHLTH (147 aa)) are disordered. Composition is skewed to basic and acidic residues over residues 146-162 (PDEK…EMQK) and 170-214 (HGGD…RSRA). Residues 196 to 222 (LDQLRAERLRREAAERSRAEALLARVQ) are a coiled coil. Position 245 is a phosphoserine (Ser-245).

This is Leukocyte receptor cluster member 1 (LENG1) from Homo sapiens (Human).